The primary structure comprises 211 residues: Thymidylate kinase (211 aa).

Residue 7-14 coordinates ATP; that stretch reads GIDGCGKT.

The protein belongs to the thymidylate kinase family.

The enzyme catalyses dTMP + ATP = dTDP + ADP. Its function is as follows. Phosphorylation of dTMP to form dTDP in both de novo and salvage pathways of dTTP synthesis. This chain is Thymidylate kinase, found in Anaplasma marginale (strain St. Maries).